We begin with the raw amino-acid sequence, 228 residues long: UPF0173 metal-dependent hydrolase Tpen_1493 (228 aa).

Belongs to the UPF0173 family.

The chain is UPF0173 metal-dependent hydrolase Tpen_1493 from Thermofilum pendens (strain DSM 2475 / Hrk 5).